A 340-amino-acid chain; its full sequence is Toxin coregulated pilus biosynthesis protein E (340 aa).

Transmembrane regions (helical) follow at residues 108–131 (AISS…GYSV), 146–161 (WPGV…FSLY), and 312–333 (NISL…FSLV).

It belongs to the GSP F family.

The protein resides in the cell inner membrane. Its function is as follows. Probably involved in cholera toxin receptor (GM1) interaction in order to bring the cells within close proximity of the ganglioside for efficient toxin delivery. The polypeptide is Toxin coregulated pilus biosynthesis protein E (tcpE) (Vibrio cholerae serotype O1 (strain ATCC 39315 / El Tor Inaba N16961)).